The sequence spans 162 residues: NADH-quinone oxidoreductase subunit I (162 aa).

2 consecutive 4Fe-4S ferredoxin-type domains span residues 54–83 (RRYE…IESE) and 93–122 (TRYD…ETHI). [4Fe-4S] cluster contacts are provided by Cys63, Cys66, Cys69, Cys73, Cys102, Cys105, Cys108, and Cys112.

This sequence belongs to the complex I 23 kDa subunit family. As to quaternary structure, NDH-1 is composed of 14 different subunits. Subunits NuoA, H, J, K, L, M, N constitute the membrane sector of the complex. [4Fe-4S] cluster is required as a cofactor.

Its subcellular location is the cell inner membrane. The catalysed reaction is a quinone + NADH + 5 H(+)(in) = a quinol + NAD(+) + 4 H(+)(out). Its function is as follows. NDH-1 shuttles electrons from NADH, via FMN and iron-sulfur (Fe-S) centers, to quinones in the respiratory chain. The immediate electron acceptor for the enzyme in this species is believed to be ubiquinone. Couples the redox reaction to proton translocation (for every two electrons transferred, four hydrogen ions are translocated across the cytoplasmic membrane), and thus conserves the redox energy in a proton gradient. This chain is NADH-quinone oxidoreductase subunit I, found in Paraburkholderia xenovorans (strain LB400).